Reading from the N-terminus, the 1025-residue chain is Multidrug resistance protein MdtC (1025 aa).

A run of 12 helical transmembrane segments spans residues 3 to 23 (FFAL…AITL), 333 to 353 (EVEQ…FLFL), 360 to 380 (IIPA…MYLC), 387 to 407 (LSLM…IVVL), 431 to 451 (VGFT…PLLL), 463 to 483 (FAVT…TLTP), 528 to 548 (LVGV…ISIP), 853 to 873 (VILI…LYES), 875 to 895 (VHPL…LLAL), 897 to 917 (LFNA…IGIV), 953 to 973 (PIMM…LSGG), and 984 to 1004 (ITIV…TPVV).

This sequence belongs to the resistance-nodulation-cell division (RND) (TC 2.A.6) family. MdtC subfamily. Part of a tripartite efflux system composed of MdtA, MdtB and MdtC. MdtC forms a heteromultimer with MdtB.

The protein resides in the cell inner membrane. Functionally, the MdtABC tripartite complex confers resistance against novobiocin and deoxycholate. This Escherichia coli (strain ATCC 8739 / DSM 1576 / NBRC 3972 / NCIMB 8545 / WDCM 00012 / Crooks) protein is Multidrug resistance protein MdtC.